Here is a 633-residue protein sequence, read N- to C-terminus: Extracellular metalloproteinase 3 (633 aa).

The signal sequence occupies residues 1–18 (MHGLLLAGLLALPMNVLA). Positions 19-246 (HPAEQHASNV…VHNVVDYVAS (228 aa)) are excised as a propeptide. An N-linked (GlcNAc...) asparagine glycan is attached at Asn-410. His-429 lines the Zn(2+) pocket. Residue Glu-430 is part of the active site. His-433 contacts Zn(2+). Asn-480 and Asn-622 each carry an N-linked (GlcNAc...) asparagine glycan.

This sequence belongs to the peptidase M36 family. Zn(2+) is required as a cofactor.

It localises to the secreted. Secreted metalloproteinase probably acting as a virulence factor. The polypeptide is Extracellular metalloproteinase 3 (MEP3) (Trichophyton tonsurans (Scalp ringworm fungus)).